The following is a 201-amino-acid chain: Potassium-transporting ATPase KdpC subunit (201 aa).

A helical membrane pass occupies residues 17-37 (LLTGLAYPLAMTGLAGILFPV).

The protein belongs to the KdpC family. The system is composed of three essential subunits: KdpA, KdpB and KdpC.

It is found in the cell inner membrane. Functionally, part of the high-affinity ATP-driven potassium transport (or Kdp) system, which catalyzes the hydrolysis of ATP coupled with the electrogenic transport of potassium into the cytoplasm. This subunit acts as a catalytic chaperone that increases the ATP-binding affinity of the ATP-hydrolyzing subunit KdpB by the formation of a transient KdpB/KdpC/ATP ternary complex. The chain is Potassium-transporting ATPase KdpC subunit from Methylobacterium nodulans (strain LMG 21967 / CNCM I-2342 / ORS 2060).